Here is a 1077-residue protein sequence, read N- to C-terminus: TSC22 domain family protein 1 (1077 aa).

Positions 1 to 98 (MHQPPESTAA…SQAQLQGQPL (98 aa)) are required for interaction with TGFBR1 and promotion of TGF-beta signaling. Disordered stretches follow at residues 22 to 112 (MAHP…SGFQ), 125 to 283 (ISSN…VPSS), 458 to 492 (QTPT…SVGS), 842 to 874 (SSAA…GSLV), and 909 to 947 (QAIG…SDGS). Over residues 58–70 (FPPPSLLQPPPPA) the composition is skewed to pro residues. A compositionally biased stretch (low complexity) spans 84-96 (SLNLLSQAQLQGQ). Acidic residues predominate over residues 133-142 (EDTESYDDLD). Over residues 216 to 240 (HPHHLHHHHHPHHGHHLHHGHHHSS) the composition is skewed to basic residues. Ser263 carries the post-translational modification Phosphoserine. A compositionally biased stretch (low complexity) spans 471–489 (TSGSSVSSSVSTLSHYTES). Polar residues predominate over residues 852 to 874 (VPTNLVPPQNIAQPPATQNGSLV). Over residues 933–947 (MSGDSGGMSAVSDGS) the composition is skewed to low complexity. Residues 1010 to 1031 (LKEQIKELIEKNSQLEQENNLL) form a leucine-zipper region. The tract at residues 1042-1077 (QFQAQLQTGSPPATTQPQGTTQPPAQPASQGSGSTA) is disordered. Residues 1048-1077 (QTGSPPATTQPQGTTQPPAQPASQGSGSTA) are compositionally biased toward low complexity.

This sequence belongs to the TSC-22/Dip/Bun family. As to quaternary structure, forms homodimers. Forms heterodimers. Component of a complex composed of TSC22D1 (via N-terminus), TGFBR1 and TGFBR2; the interaction between TSC22D1 and TGFBR1 is inhibited by SMAD7 and promoted by TGFB1. Interacts with SMAD7; the interaction requires TGF-beta and the interaction is inhibited by TGFBR1. Interacts with TPT1/fortilin; interaction results in the destabilization of TSC22D1 protein and prevents TSC22D1-mediated apoptosis. Interacts with SMAD4 (via N-terminus). Interacts with ACVRL1/ALK1, ACVR1/ALK2, BMPR1A/ALK3, ACVR1B/ALK4, BMPR1B/ALK6, ACVR2A/ACTRII, and BMPR2. Interacts with SMAD6. Interacts with TFE3; the interaction is enhanced in the presence of TGF-beta. Forms a heterodimer with TSC22D4/THG1. In terms of assembly, forms a heterodimer with TSC22D4/THG1. Interacts with histone H1-2. Interacts with GNL3. As to expression, expressed in bone marrow cells (at protein level). Expressed in T-cells. Expressed in the brain. Expressed in the myoepithelial cells of the mammary gland ducts and alveoli, expression is consistent throughout pregnancy, lactation and involution (at protein level). Expressed in the cortex, medulla and papilla of the kidney. In terms of tissue distribution, expressed in the myoepithelial cells of the mammary gland, expression significantly increases in the secretory luminal epithelium of the mammary gland at the initiation of involution, with levels decreasing from day 3 of involution onwards (at protein level). Expressed in the cortex, medulla and papilla of the kidney.

The protein localises to the cytoplasm. The protein resides in the nucleus. It is found in the cell membrane. It localises to the mitochondrion. Functionally, transcriptional repressor. Acts on the C-type natriuretic peptide (CNP) promoter. Acts to promote CASP3-mediated apoptosis. Positively regulates TGF-beta signaling by interacting with SMAD7 which inhibits binding of SMAD7 to TGFBR1, preventing recruitment of SMURF ubiquitin ligases to TGFBR1 and inhibiting SMURF-mediated ubiquitination and degradation of TGFBR1. Contributes to enhancement of TGF-beta signaling by binding to and modulating the transcription activator activity of SMAD4. Promotes TGF-beta-induced transcription of COL1A2; via its interaction with TFE3 at E-boxes in the gene proximal promoter. Plays a role in the repression of hematopoietic precursor cell growth. Promotes IL2 deprivation-induced apoptosis in T-lymphocytes, via repression of TSC22D3/GILZ transcription and activation of the caspase cascade. Its function is as follows. May act to negatively regulate TGFB3 signaling and thereby inhibit cell death in mammary gland cells. In terms of biological role, positively regulates cell death in response to TGFB3 during mammary gland involution. This Mus musculus (Mouse) protein is TSC22 domain family protein 1.